The sequence spans 453 residues: MLPKIALVGRPNVGKSTLFNRLIRKNRAITHDRPGVTRDRMEGLVQSIGHPSFILIDTGGVILDSHYSTINIIDELHGFEKDIFQQVQLAIEESQAICLIVNARDGLLPFDEHLALFLRKTGKPILLAVNKVDGIEKEDQIVAEFHILGLPMIAVSAEHGHNIRQLENELSLLLPNNENIKDQSTAQAALKLAIIGRPNAGKSSIINAIIGKNKLIVSNIAGTTRDSIDIPFIFNKTQYLFVDTAGIRRRTKITDPVERFSVNASIKSATKANITLYVIDATEGITAQDKRLLDLLDTRKIPFILLINKTDLIAKKQKTLLSKSFKEELQFCPHIPILMVSAVTSSGLDQIIAMAEQVYLECSTRINTGVLNRAMEEIITRHQPPVVRRIRPKFFYLTQAETSPPTFVFFVNDAEKISETYVRYLERSLRKIFNLHHAPIRIRLRSSHKKRNQ.

2 consecutive EngA-type G domains span residues 3–178 and 190–363; these read PKIA…PNNE and LKLA…LECS. Residues 9 to 16, 57 to 61, 130 to 133, 196 to 203, 243 to 247, and 308 to 311 contribute to the GTP site; these read GRPNVGKS, DTGGV, NKVD, GRPNAGKS, DTAGI, and NKTD. Residues 364 to 448 form the KH-like domain; the sequence is TRINTGVLNR…PIRIRLRSSH (85 aa).

Belongs to the TRAFAC class TrmE-Era-EngA-EngB-Septin-like GTPase superfamily. EngA (Der) GTPase family. Associates with the 50S ribosomal subunit.

Its function is as follows. GTPase that plays an essential role in the late steps of ribosome biogenesis. This Lawsonia intracellularis (strain PHE/MN1-00) protein is GTPase Der.